The sequence spans 71 residues: uncharacterized protein (71 aa).

It localises to the mitochondrion matrix. The protein resides in the kinetoplast. This is an uncharacterized protein from Trypanosoma brucei brucei.